Reading from the N-terminus, the 510-residue chain is Inositol-3-phosphate synthase (510 aa).

NAD(+) contacts are provided by glycine 70, glycine 71, asparagine 72, asparagine 73, aspartate 143, isoleucine 180, glutamine 190, arginine 193, threonine 230, alanine 231, asparagine 232, threonine 233, glycine 281, serine 282, aspartate 306, serine 309, asparagine 340, asparagine 341, aspartate 342, lysine 355, glycine 393, aspartate 394, aspartate 422, and serine 423.

It belongs to the myo-inositol 1-phosphate synthase family. The cofactor is NAD(+).

The protein resides in the cytoplasm. Its subcellular location is the cytosol. It is found in the nucleus. The enzyme catalyses D-glucose 6-phosphate = 1D-myo-inositol 3-phosphate. The protein operates within polyol metabolism; myo-inositol biosynthesis; myo-inositol from D-glucose 6-phosphate: step 1/2. Key enzyme in myo-inositol biosynthesis pathway that catalyzes the conversion of glucose 6-phosphate to 1-myo-inositol 1-phosphate in a NAD-dependent manner. The sequence is that of Inositol-3-phosphate synthase (TUR1) from Spirodela polyrhiza (Giant duckweed).